Consider the following 219-residue polypeptide: Claudin-3 (219 aa).

Over 1–8 (MSMGLEIT) the chain is Cytoplasmic. A helical transmembrane segment spans residues 9–29 (GTSLAVLGWLCTIVCCALPMW). The Extracellular segment spans residues 30 to 80 (RVSAFIGSSIITAQITWEGLWMNCVVQSTGQMQCKMYDSLLALPQDLQAAR). Residues 81-101 (ALIVVSILLAAFGLLVALVGA) form a helical membrane-spanning segment. The Cytoplasmic segment spans residues 102–115 (QCTNCVQDETAKAK). A helical transmembrane segment spans residues 116 to 136 (ITIVAGVLFLLAAVLTLVPVS). Residues 137 to 161 (WSANTIIRDFYNPLVPEAQKREMGT) lie on the Extracellular side of the membrane. The chain crosses the membrane as a helical span at residues 162–182 (GLYVGWAAAALQLLGGALLCC). The Cytoplasmic segment spans residues 183 to 219 (SCPPREKYAPTKILYSAPRSTGPGTGTGTAYDRKDYV). The residue at position 197 (Tyr-197) is a Phosphotyrosine. Ser-198 is modified (phosphoserine). Residues 218-219 (YV) are interactions with TJP1, TJP2 and TJP3.

It belongs to the claudin family. Can form homo- and heteropolymers with other CLDN. Homopolymers interact with CLDN1 and CLDN2 homopolymers. Interacts in cis (within the same plasma membrane) with CLDN19. Directly interacts with TJP1/ZO-1, TJP2/ZO-2 and TJP3/ZO-3.

The protein resides in the cell junction. The protein localises to the tight junction. It is found in the cell membrane. In terms of biological role, plays a major role in tight junction-specific obliteration of the intercellular space, through calcium-independent cell-adhesion activity. This chain is Claudin-3 (Cldn3), found in Rattus norvegicus (Rat).